Consider the following 292-residue polypeptide: UDP-3-O-acyl-N-acetylglucosamine deacetylase (292 aa).

Positions 76, 232, and 236 each coordinate Zn(2+). H259 functions as the Proton donor in the catalytic mechanism.

Belongs to the LpxC family. Zn(2+) is required as a cofactor.

The enzyme catalyses a UDP-3-O-[(3R)-3-hydroxyacyl]-N-acetyl-alpha-D-glucosamine + H2O = a UDP-3-O-[(3R)-3-hydroxyacyl]-alpha-D-glucosamine + acetate. Its pathway is glycolipid biosynthesis; lipid IV(A) biosynthesis; lipid IV(A) from (3R)-3-hydroxytetradecanoyl-[acyl-carrier-protein] and UDP-N-acetyl-alpha-D-glucosamine: step 2/6. In terms of biological role, catalyzes the hydrolysis of UDP-3-O-myristoyl-N-acetylglucosamine to form UDP-3-O-myristoylglucosamine and acetate, the committed step in lipid A biosynthesis. The sequence is that of UDP-3-O-acyl-N-acetylglucosamine deacetylase from Thermodesulfovibrio yellowstonii (strain ATCC 51303 / DSM 11347 / YP87).